We begin with the raw amino-acid sequence, 120 residues long: Histone H3-like centromeric protein cnp1 (120 aa).

Residues 1–26 (MAKKSLMAEPGDPIPRPRKKRYRPGT) form a disordered region. The segment at 14–120 (IPRPRKKRYR…MQLARRIRGA (107 aa)) is H3-like.

It belongs to the histone H3 family. As to quaternary structure, component of centromeric nucleosomes, where DNA is wrapped around a histone octamer core. The octamer contains two molecules each of H2A, H2B, cnp1/CENPA and H4 assembled in one cnp1-H4 heterotetramer and two H2A-H2B heterodimers. Interacts with the inner kinetochore. Component of centromeric nucleosomes. Interacts with mis6. Interacts with sim4. Post-translationally, ubiquitinated. Is degraded through ubiquitin-mediated proteolysis when not protected by its association to the kinetochore.

The protein localises to the nucleus. It localises to the chromosome. It is found in the centromere. Its function is as follows. Histone H3-like nucleosomal protein that is specifically found in centromeric nucleosomes. Replaces conventional H3 in the nucleosome core of centromeric chromatin that serves as an assembly site for the inner kinetochore. Required for recruitment and assembly of kinetochore proteins, mitotic progression and chromosome segregation. May serve as an epigenetic mark that propagates centromere identity through replication and cell division. This chain is Histone H3-like centromeric protein cnp1 (cnp1), found in Schizosaccharomyces pombe (strain 972 / ATCC 24843) (Fission yeast).